A 452-amino-acid polypeptide reads, in one-letter code: MNSGILQVFQRELICPICMNYFIDPVTIDCGHSFCRPCFYLNWQDMAVLAQCSKCKKTTRQRNLKTNICLKNMASIARKASLRQFLSSEEQICGTHRETKEMFCEVDKSLLCLLCSNSQEHRNHRHCPTEWAAEERREELLRKMQSLWRKMCENHRNLNMATNRIRCWKDYVSLRIEAIRAEYHKMVAFFHEEEQRHLERLQKEGEDIFQQLNESKARMEHSRELLRGMYEDLRQMCHKAVVELFQSFGDILQRYESLLLQVSEPVNPEFSAGPIIGLMDRLKGFRVYLTLQHARASSHIFLHGDLRSMKVGCDPQHDPNITDKSECFLQWGADFFISGKFYWEFNMGHSWNWAFGVCNNYWKEKRQNDMIDGEVGLFLLGCVKEDTHCSLFTTSPLVMQYVPRPTDTVGLFLDCEGRTVSFVDVDRSSLIYTIPNCSFSPPLWPIICCSHF.

The RING-type zinc-finger motif lies at 15-56 (CPICMNYFIDPVTIDCGHSFCRPCFYLNWQDMAVLAQCSKCK). The B box-type zinc finger occupies 88-129 (SEEQICGTHRETKEMFCEVDKSLLCLLCSNSQEHRNHRHCPT). Residues C93, H96, C115, and H121 each contribute to the Zn(2+) site. One can recognise a B30.2/SPRY domain in the interval 269–452 (EFSAGPIIGL…LWPIICCSHF (184 aa)).

The protein belongs to the TRIM/RBCC family.

This is Tripartite motif-containing protein 51G from Homo sapiens (Human).